The chain runs to 317 residues: Putative 2-hydroxyacid dehydrogenase SE_1879 (317 aa).

Residues 155–156 (EI), 234–236 (AGR), and aspartate 260 each bind NAD(+). Residue arginine 236 is part of the active site. Residue glutamate 265 is part of the active site. Catalysis depends on histidine 283, which acts as the Proton donor. 283 to 286 (HIGN) provides a ligand contact to NAD(+).

This sequence belongs to the D-isomer specific 2-hydroxyacid dehydrogenase family.

In Staphylococcus epidermidis (strain ATCC 12228 / FDA PCI 1200), this protein is Putative 2-hydroxyacid dehydrogenase SE_1879.